Reading from the N-terminus, the 271-residue chain is Putative protein FAM220BP (271 aa).

In Homo sapiens (Human), this protein is Putative protein FAM220BP (FAM220BP).